Here is a 254-residue protein sequence, read N- to C-terminus: L-rhamnose 1-dehydrogenase (NAD(P)(+)) (254 aa).

6 residues coordinate NADP(+): Gly-13, Ser-15, Ile-18, Asp-64, Val-65, and Asn-91. Residue Ser-144 is the Proton donor of the active site. Beta-L-rhamnose-binding residues include Ser-144, Ser-146, Gln-154, and Tyr-157. The NADP(+) site is built by Tyr-157 and Lys-161. Residue Tyr-157 is the Proton acceptor of the active site. Catalysis depends on Lys-161, which acts as the Lowers pKa of active site Tyr. Residue Thr-189 coordinates beta-L-rhamnose. Ile-190 lines the NADP(+) pocket. Beta-L-rhamnose is bound at residue Asn-195.

The protein belongs to the short-chain dehydrogenases/reductases (SDR) family.

It catalyses the reaction L-rhamnofuranose + NAD(+) = L-rhamnono-1,4-lactone + NADH + H(+). The enzyme catalyses L-rhamnofuranose + NADP(+) = L-rhamnono-1,4-lactone + NADPH + H(+). The protein operates within carbohydrate degradation; L-rhamnose degradation. In terms of biological role, NAD(P)-dependent dehydrogenase that catalyzes the oxidation of L-rhamnose to L-rhamnono-1,4-lactone. Also shows high activity with L-lyxose and low activity with L-mannose. Can utilize either NAD(+) or NADP(+), with a slight preference for NADP(+). Catalyzes the first step in an alternative pathway for rhamnose utilization that does not involve phosphorylated intermediates. The chain is L-rhamnose 1-dehydrogenase (NAD(P)(+)) from Sphingomonas sp. (strain SKA58).